The sequence spans 1036 residues: KAT8 regulatory NSL complex subunit 1 (1036 aa).

Position 104 is an N6-acetyllysine (Lys104). Disordered regions lie at residues Gly145 to Pro211 and Asn226 to Asn257. Residues Asn226–Gly244 show a composition bias toward polar residues. Low complexity predominate over residues Ser245–Ser256. Position 249 is a phosphoserine (Ser249). A Glycyl lysine isopeptide (Lys-Gly) (interchain with G-Cter in SUMO2) cross-link involves residue Lys262. Ser268 is subject to Phosphoserine. Residues Thr285–Gln312 adopt a coiled-coil conformation. Residue Lys331 forms a Glycyl lysine isopeptide (Lys-Gly) (interchain with G-Cter in SUMO2) linkage. 2 disordered regions span residues Asp399 to Pro423 and Ser739 to Gly787. A compositionally biased stretch (low complexity) spans Ser759–Ser772. The tract at residues Pro781–Tyr813 is required for activation of KAT8 histone acetyltransferase activity. The PEHE domain maps to Glu815–Trp966. Residues Glu841 to Glu859 form an interaction with KAT8 HAT domain region. The interval Val869–Ala931 is disordered. Residues Thr886–Ser896 are compositionally biased toward polar residues. Low complexity predominate over residues Ser906–Ser919. Ser922 and Ser925 each carry phosphoserine. Thr934 is subject to Phosphothreonine. A Phosphoserine modification is found at Ser976. Residues Asp989–Lys1020 are disordered.

Component of the NSL complex at least composed of MOF/KAT8, KANSL1, KANSL2, KANSL3, MCRS1, PHF20, OGT1/OGT, WDR5 and HCFC1. Interacts (via PEHE domain) with KAT8 (via HAT domain); the interaction is direct. Component of some MLL1/MLL complex, at least composed of the core components KMT2A/MLL1, ASH2L, HCFC1, WDR5 and RBBP5, as well as the facultative components BACC1, CHD8, E2F6, HSP70, INO80C, KANSL1, LAS1L, MAX, MCRS1, MGA, KAT8/MOF, PELP1, PHF20, PRP31, RING2, RUVB1/TIP49A, RUVB2/TIP49B, SENP3, TAF1, TAF4, TAF6, TAF7, TAF9 and TEX10.

The protein localises to the nucleus. It is found in the chromosome. Its subcellular location is the centromere. The protein resides in the kinetochore. It localises to the mitochondrion. The protein localises to the cytoplasm. It is found in the cytoskeleton. Its subcellular location is the spindle pole. Functionally, non-catalytic component of the NSL histone acetyltransferase complex, a multiprotein complex that mediates histone H4 acetylation at 'Lys-5'- and 'Lys-8' (H4K5ac and H4K8ac) at transcription start sites and promotes transcription initiation. The NSL complex also acts as a regulator of gene expression in mitochondria. In addition to its role in transcription, KANSL1 also plays an essential role in spindle assembly during mitosis. Associates with microtubule ends and contributes to microtubule stability. This Mus musculus (Mouse) protein is KAT8 regulatory NSL complex subunit 1 (Kansl1).